Reading from the N-terminus, the 831-residue chain is AMP deaminase (831 aa).

3 disordered regions span residues 26–45 (NPGA…QDTP), 66–110 (NGTQ…KLLN), and 130–149 (NAVV…METT). A phosphoserine mark is found at serine 79 and serine 84. Histidine 319 and histidine 321 together coordinate Zn(2+). Residues histidine 321 and 390–395 (KFNLKY) each bind substrate. Zn(2+) is bound at residue histidine 587. Glutamate 590 contributes to the substrate binding site. Residue histidine 609 is the Proton acceptor of the active site. Aspartate 664 contributes to the Zn(2+) binding site. 665 to 668 (DPLQ) serves as a coordination point for substrate. Serine 758, serine 776, serine 780, and serine 782 each carry phosphoserine.

It belongs to the metallo-dependent hydrolases superfamily. Adenosine and AMP deaminases family. In terms of assembly, homotetramer. The cofactor is Zn(2+).

The protein resides in the cytoplasm. It carries out the reaction AMP + H2O + H(+) = IMP + NH4(+). It participates in purine metabolism; IMP biosynthesis via salvage pathway; IMP from AMP: step 1/1. Functionally, AMP deaminase plays a critical role in energy metabolism. The protein is AMP deaminase (ada1) of Schizosaccharomyces pombe (strain 972 / ATCC 24843) (Fission yeast).